The primary structure comprises 327 residues: Ribonucleoside-diphosphate reductase small chain (327 aa).

Residues aspartate 70, glutamate 101, and histidine 104 each coordinate Fe cation. The active site involves tyrosine 108. Fe cation-binding residues include glutamate 164, glutamate 198, and histidine 201.

Belongs to the ribonucleoside diphosphate reductase small chain family. As to quaternary structure, heterotetramer composed of a homodimer of the large subunit (R1) and a homodimer of the small subunit (R2). Larger multisubunit protein complex are also active, composed of (R1)n(R2)n. It depends on Fe cation as a cofactor.

The enzyme catalyses a 2'-deoxyribonucleoside 5'-diphosphate + [thioredoxin]-disulfide + H2O = a ribonucleoside 5'-diphosphate + [thioredoxin]-dithiol. Functionally, ribonucleoside-diphosphate reductase holoenzyme provides the precursors necessary for viral DNA synthesis. Allows virus growth in non-dividing cells. Catalyzes the biosynthesis of deoxyribonucleotides from the corresponding ribonucleotides. This chain is Ribonucleoside-diphosphate reductase small chain, found in African swine fever virus (isolate Tick/Malawi/Lil 20-1/1983) (ASFV).